The following is a 169-amino-acid chain: Der GTPase-activating protein YihI (169 aa).

Disordered stretches follow at residues 1 to 83 (MNPL…PTKP) and 150 to 169 (DEEE…LKGN). The span at 21–30 (NREELNAEGR) shows a compositional bias: basic and acidic residues. Residues 31-40 (ARKREKKHRG) are compositionally biased toward basic residues. Composition is skewed to basic and acidic residues over residues 51–66 (SGDK…DPRL) and 150–161 (DEEEREEEKQDD).

This sequence belongs to the YihI family. As to quaternary structure, interacts with Der.

Its function is as follows. A GTPase-activating protein (GAP) that modifies Der/EngA GTPase function. May play a role in ribosome biogenesis. The chain is Der GTPase-activating protein YihI from Photorhabdus laumondii subsp. laumondii (strain DSM 15139 / CIP 105565 / TT01) (Photorhabdus luminescens subsp. laumondii).